We begin with the raw amino-acid sequence, 550 residues long: Dihydroxy-acid dehydratase (550 aa).

D78 contributes to the Mg(2+) binding site. C119 is a binding site for [2Fe-2S] cluster. Mg(2+)-binding residues include D120 and K121. An N6-carboxylysine modification is found at K121. C191 contributes to the [2Fe-2S] cluster binding site. E440 is a Mg(2+) binding site. Residue S466 is the Proton acceptor of the active site.

This sequence belongs to the IlvD/Edd family. Homodimer. The cofactor is [2Fe-2S] cluster. Requires Mg(2+) as cofactor.

It catalyses the reaction (2R)-2,3-dihydroxy-3-methylbutanoate = 3-methyl-2-oxobutanoate + H2O. The catalysed reaction is (2R,3R)-2,3-dihydroxy-3-methylpentanoate = (S)-3-methyl-2-oxopentanoate + H2O. The protein operates within amino-acid biosynthesis; L-isoleucine biosynthesis; L-isoleucine from 2-oxobutanoate: step 3/4. It participates in amino-acid biosynthesis; L-valine biosynthesis; L-valine from pyruvate: step 3/4. In terms of biological role, functions in the biosynthesis of branched-chain amino acids. Catalyzes the dehydration of (2R,3R)-2,3-dihydroxy-3-methylpentanoate (2,3-dihydroxy-3-methylvalerate) into 2-oxo-3-methylpentanoate (2-oxo-3-methylvalerate) and of (2R)-2,3-dihydroxy-3-methylbutanoate (2,3-dihydroxyisovalerate) into 2-oxo-3-methylbutanoate (2-oxoisovalerate), the penultimate precursor to L-isoleucine and L-valine, respectively. This Methanococcus maripaludis (strain C6 / ATCC BAA-1332) protein is Dihydroxy-acid dehydratase.